Reading from the N-terminus, the 423-residue chain is Zinc-type alcohol dehydrogenase-like protein C1198.01 (423 aa).

Positions 14–36 are disordered; it reads KQLGHREVSEGSTQPKPDPSGAT. Residues cysteine 74, histidine 97, cysteine 127, cysteine 130, cysteine 133, and cysteine 141 each contribute to the Zn(2+) site.

It belongs to the zinc-containing alcohol dehydrogenase family. Class-III subfamily. Zn(2+) is required as a cofactor.

The protein localises to the golgi apparatus. This chain is Zinc-type alcohol dehydrogenase-like protein C1198.01, found in Schizosaccharomyces pombe (strain 972 / ATCC 24843) (Fission yeast).